A 265-amino-acid polypeptide reads, in one-letter code: Capsule polysaccharide export inner-membrane protein CtrC (265 aa).

Transmembrane regions (helical) follow at residues 37–57 (IGFL…VLMW), 64–84 (NVSA…MMMW), 121–141 (IAGA…IGWI), 147–167 (IFYM…LGLV), 178–198 (FGKV…VFFF), and 236–256 (NPWY…AVVA). One can recognise an ABC transmembrane type-2 domain in the interval 37 to 258 (IGFLWLFVEP…LLGLAVVARF (222 aa)).

It belongs to the ABC-2 integral membrane protein family.

It localises to the cell inner membrane. Functionally, may form an ATP-driven capsule polysaccharide export apparatus, in association with the CtrB and CtrD proteins. The protein is Capsule polysaccharide export inner-membrane protein CtrC (ctrC) of Neisseria meningitidis serogroup A / serotype 4A (strain DSM 15465 / Z2491).